A 941-amino-acid polypeptide reads, in one-letter code: Glycine dehydrogenase (decarboxylating) (941 aa).

An N6-(pyridoxal phosphate)lysine modification is found at lysine 692.

The protein belongs to the GcvP family. As to quaternary structure, the glycine cleavage system is composed of four proteins: P, T, L and H. Pyridoxal 5'-phosphate is required as a cofactor.

It catalyses the reaction N(6)-[(R)-lipoyl]-L-lysyl-[glycine-cleavage complex H protein] + glycine + H(+) = N(6)-[(R)-S(8)-aminomethyldihydrolipoyl]-L-lysyl-[glycine-cleavage complex H protein] + CO2. The glycine cleavage system catalyzes the degradation of glycine. The P protein binds the alpha-amino group of glycine through its pyridoxal phosphate cofactor; CO(2) is released and the remaining methylamine moiety is then transferred to the lipoamide cofactor of the H protein. The protein is Glycine dehydrogenase (decarboxylating) of Mycobacterium tuberculosis (strain ATCC 25177 / H37Ra).